Consider the following 489-residue polypeptide: GTPase Der (489 aa).

EngA-type G domains lie at 3-166 (PVVA…AEAM) and 200-373 (IKLA…ESAT). GTP is bound by residues 9–16 (GRPNVGKS), 56–60 (DTGGI), 118–121 (NKVD), 206–213 (GKPNVGKS), 253–257 (DTAGV), and 318–321 (NKWD). In terms of domain architecture, KH-like spans 374-458 (RRVSTSMLTR…PIQVRFQEGG (85 aa)).

It belongs to the TRAFAC class TrmE-Era-EngA-EngB-Septin-like GTPase superfamily. EngA (Der) GTPase family. In terms of assembly, associates with the 50S ribosomal subunit.

In terms of biological role, GTPase that plays an essential role in the late steps of ribosome biogenesis. The chain is GTPase Der from Shewanella loihica (strain ATCC BAA-1088 / PV-4).